We begin with the raw amino-acid sequence, 162 residues long: Large ribosomal subunit protein uL22c (162 aa).

The protein belongs to the universal ribosomal protein uL22 family. As to quaternary structure, part of the 50S ribosomal subunit.

The protein localises to the plastid. Its subcellular location is the chloroplast. Its function is as follows. This protein binds specifically to 23S rRNA. In terms of biological role, the globular domain of the protein is located near the polypeptide exit tunnel on the outside of the subunit, while an extended beta-hairpin is found that lines the wall of the exit tunnel in the center of the 70S ribosome. This chain is Large ribosomal subunit protein uL22c (rpl22), found in Cucumis sativus (Cucumber).